The primary structure comprises 670 residues: Neutral ceramidase (670 aa).

Positions 1-24 (MSRSAFTALLLSCVLLALSMPARA) are cleaved as a signal peptide. A Mg(2+)-binding site is contributed by His-61. 3 residues coordinate substrate: Asn-84, Gln-92, and Asp-111. Residue His-121 coordinates Zn(2+). Residue Ser-130 coordinates substrate. Zn(2+) is bound at residue His-228. Ser-274 functions as the Nucleophile in the catalytic mechanism. An intrachain disulfide couples Cys-346 to Cys-394. Residue Glu-435 coordinates Zn(2+). Tyr-469 contributes to the substrate binding site. Tyr-472 contacts Zn(2+). Residues Asp-603, Asp-605, and Thr-608 each contribute to the Mg(2+) site. Positions 644–670 (NAKNFWTQKISEIGGSTRSFEVLGTTP) are required for correct folding and localization.

Belongs to the neutral ceramidase family. Homodimer. It depends on Zn(2+) as a cofactor. The cofactor is Mg(2+).

Its subcellular location is the secreted. It carries out the reaction an N-acylsphing-4-enine + H2O = sphing-4-enine + a fatty acid. Inhibited by EDTA, EGTA and D/L-sphinganine D-erythro-sphingosine. L-erythro-sphingosine is a less powerful inhibitor. Stimulated by glycerophospholipids: cardiolipin is the most effective, followed by phosphatidic acid, phosphatidylethanolamine and phosphatidylglycerol, whereas phosphatidylcholine, lysophosphatidic acid and diacylglycerol are less effective. Catalyzes the cleavage of the N-acyl linkage of the ceramides (Cers) to yield sphingosine (Sph) and free fatty acid at an optimal pH of 8-9. Also catalyzes the synthesis of Cers from Sph and fatty acid. The chain is Neutral ceramidase from Pseudomonas aeruginosa (strain ATCC 15692 / DSM 22644 / CIP 104116 / JCM 14847 / LMG 12228 / 1C / PRS 101 / PAO1).